The following is a 335-amino-acid chain: F420-dependent glucose-6-phosphate dehydrogenase 1 (335 aa).

Coenzyme F420-(gamma-Glu)n is bound at residue D38. The active-site Proton donor is the H39. Residues T75 and 106 to 107 contribute to the coenzyme F420-(gamma-Glu)n site; that span reads TG. E108 functions as the Proton acceptor in the catalytic mechanism. Residues N111, 176-177, and 179-180 each bind coenzyme F420-(gamma-Glu)n; these read GG and VV. Residues T194, K197, K258, and R282 each contribute to the substrate site.

Belongs to the F420-dependent glucose-6-phosphate dehydrogenase family. As to quaternary structure, homodimer.

It catalyses the reaction oxidized coenzyme F420-(gamma-L-Glu)(n) + D-glucose 6-phosphate + H(+) = 6-phospho-D-glucono-1,5-lactone + reduced coenzyme F420-(gamma-L-Glu)(n). Functionally, catalyzes the coenzyme F420-dependent oxidation of glucose 6-phosphate (G6P) to 6-phosphogluconolactone. The protein is F420-dependent glucose-6-phosphate dehydrogenase 1 of Rhodococcus jostii (strain RHA1).